We begin with the raw amino-acid sequence, 427 residues long: Enolase (427 aa).

Residue Q163 coordinates (2R)-2-phosphoglycerate. E205 acts as the Proton donor in catalysis. Residues D242, E285, and D312 each coordinate Mg(2+). (2R)-2-phosphoglycerate is bound by residues K337, R366, S367, and K388. Residue K337 is the Proton acceptor of the active site.

This sequence belongs to the enolase family. Mg(2+) is required as a cofactor.

The protein resides in the cytoplasm. Its subcellular location is the secreted. It is found in the cell surface. The enzyme catalyses (2R)-2-phosphoglycerate = phosphoenolpyruvate + H2O. The protein operates within carbohydrate degradation; glycolysis; pyruvate from D-glyceraldehyde 3-phosphate: step 4/5. Catalyzes the reversible conversion of 2-phosphoglycerate (2-PG) into phosphoenolpyruvate (PEP). It is essential for the degradation of carbohydrates via glycolysis. The protein is Enolase of Burkholderia orbicola (strain MC0-3).